The chain runs to 470 residues: 3-isopropylmalate dehydratase large subunit (470 aa).

The disordered stretch occupies residues 50 to 121 (NVARGCQHRH…PCGRPGAGRH (72 aa)). Positions 349, 409, and 412 each coordinate [4Fe-4S] cluster.

The protein belongs to the aconitase/IPM isomerase family. LeuC type 1 subfamily. Heterodimer of LeuC and LeuD. Requires [4Fe-4S] cluster as cofactor.

It carries out the reaction (2R,3S)-3-isopropylmalate = (2S)-2-isopropylmalate. It functions in the pathway amino-acid biosynthesis; L-leucine biosynthesis; L-leucine from 3-methyl-2-oxobutanoate: step 2/4. Catalyzes the isomerization between 2-isopropylmalate and 3-isopropylmalate, via the formation of 2-isopropylmaleate. The protein is 3-isopropylmalate dehydratase large subunit of Azotobacter vinelandii.